A 212-amino-acid chain; its full sequence is MTRGTLNFVTSPMNAGKTANMLLRARHAATLGRRVLLAKPLSDTRHESSVIRSRCGIEMKCDLCAGPEFSFTKDVLYGDVDILLVDEAQFLSSRQIDELREVADVHGIPVWCYGLLTDFKKNLFEGSKRLVELCDKMIELDIVCYFCKADGRFHLKYANGKAVVEGPSIDISIPGDGKFVAVCHMCWTEKTSTSEEVQDPRVLCAKVIPVDR.

ATP is bound by residues 11 to 18 (SPMNAGKT), 43 to 45 (DTR), and 86 to 89 (DEAQ). Glu-87 functions as the Proton acceptor in the catalytic mechanism. Residue Phe-119 participates in substrate binding. The Zn(2+) site is built by Cys-144, Cys-147, Cys-183, and Cys-186.

This sequence belongs to the thymidine kinase family.

It catalyses the reaction thymidine + ATP = dTMP + ADP + H(+). This chain is Thymidine kinase (TK), found in Encephalitozoon cuniculi (strain GB-M1) (Microsporidian parasite).